The chain runs to 48 residues: 2-deoxy-glucose resistant protein 1, mitochondrial (48 aa).

Residues 1–28 constitute a mitochondrion transit peptide; that stretch reads MQVGFVSQTNCRSFPACIVFLFQMSQRQ.

The protein localises to the mitochondrion. The chain is 2-deoxy-glucose resistant protein 1, mitochondrial (DGR1) from Saccharomyces cerevisiae (strain ATCC 204508 / S288c) (Baker's yeast).